A 201-amino-acid chain; its full sequence is ADP-ribosylation factor-related protein 1 (201 aa).

Residue methionine 1 is modified to N-acetylmethionine. Residues glycine 24 to threonine 31, aspartate 75 to glutamine 79, and asparagine 134 to aspartate 137 contribute to the GTP site.

It belongs to the small GTPase superfamily. Arf family. In terms of assembly, interacts with SYS1.

The protein localises to the golgi apparatus. It is found in the trans-Golgi network. Its function is as follows. Trans-Golgi-associated GTPase that regulates protein sorting. Controls the targeting of ARL1 and its effector to the trans-Golgi. Required for the lipidation of chylomicrons in the intestine and required for VLDL lipidation in the liver. The polypeptide is ADP-ribosylation factor-related protein 1 (ARFRP1) (Bos taurus (Bovine)).